The following is a 540-amino-acid chain: T-complex protein 1 subunit alpha (540 aa).

Belongs to the TCP-1 chaperonin family. As to quaternary structure, component of the T-complex protein 1 (TCP1) complex.

The protein localises to the cytoplasm. Its function is as follows. Molecular chaperone; assists the folding of proteins upon ATP hydrolysis. This chain is T-complex protein 1 subunit alpha (TCP1), found in Encephalitozoon cuniculi (strain GB-M1) (Microsporidian parasite).